The following is an 845-amino-acid chain: Protein translocase subunit SecA 1 (845 aa).

ATP-binding positions include Gln85, 103–107, and Asp492; that span reads GEGKT.

The protein belongs to the SecA family. As to quaternary structure, monomer and homodimer. Part of the essential Sec protein translocation apparatus which comprises SecA, SecYEG and auxiliary proteins SecDF. Other proteins may also be involved.

The protein resides in the cell membrane. It localises to the cytoplasm. It catalyses the reaction ATP + H2O + cellular proteinSide 1 = ADP + phosphate + cellular proteinSide 2.. In terms of biological role, part of the Sec protein translocase complex. Interacts with the SecYEG preprotein conducting channel. Has a central role in coupling the hydrolysis of ATP to the transfer of proteins into and across the cell membrane, serving as an ATP-driven molecular motor driving the stepwise translocation of polypeptide chains across the membrane. The sequence is that of Protein translocase subunit SecA 1 from Corynebacterium glutamicum (strain ATCC 13032 / DSM 20300 / JCM 1318 / BCRC 11384 / CCUG 27702 / LMG 3730 / NBRC 12168 / NCIMB 10025 / NRRL B-2784 / 534).